The chain runs to 217 residues: Probable GTP-binding protein EngB (217 aa).

One can recognise an EngB-type G domain in the interval 27-201 (EGIEVAFAGR…REKLDTWFSE (175 aa)). GTP is bound by residues 35–42 (GRSNAGKS), 62–66 (GRTQL), 80–83 (DLPG), 147–150 (TKAD), and 180–182 (FSS). Mg(2+) is bound by residues S42 and T64.

It belongs to the TRAFAC class TrmE-Era-EngA-EngB-Septin-like GTPase superfamily. EngB GTPase family. It depends on Mg(2+) as a cofactor.

Its function is as follows. Necessary for normal cell division and for the maintenance of normal septation. The polypeptide is Probable GTP-binding protein EngB (Yersinia enterocolitica serotype O:8 / biotype 1B (strain NCTC 13174 / 8081)).